Consider the following 484-residue polypeptide: Probable cytosol aminopeptidase (484 aa).

Mn(2+)-binding residues include Lys256 and Asp261. Lys268 is a catalytic residue. Mn(2+) contacts are provided by Asp279, Asp338, and Glu340. Arg342 is a catalytic residue.

This sequence belongs to the peptidase M17 family. The cofactor is Mn(2+).

It is found in the cytoplasm. It catalyses the reaction Release of an N-terminal amino acid, Xaa-|-Yaa-, in which Xaa is preferably Leu, but may be other amino acids including Pro although not Arg or Lys, and Yaa may be Pro. Amino acid amides and methyl esters are also readily hydrolyzed, but rates on arylamides are exceedingly low.. The enzyme catalyses Release of an N-terminal amino acid, preferentially leucine, but not glutamic or aspartic acids.. Its function is as follows. Presumably involved in the processing and regular turnover of intracellular proteins. Catalyzes the removal of unsubstituted N-terminal amino acids from various peptides. The polypeptide is Probable cytosol aminopeptidase (Methylibium petroleiphilum (strain ATCC BAA-1232 / LMG 22953 / PM1)).